A 545-amino-acid chain; its full sequence is CTP synthase (545 aa).

An amidoligase domain region spans residues 1–266 (MTKNYIFITG…DDYICNYFKL (266 aa)). Residue Ser-14 participates in CTP binding. Residue Ser-14 participates in UTP binding. Residues 15-20 (SLGKGI) and Asp-72 each bind ATP. Residues Asp-72 and Glu-140 each contribute to the Mg(2+) site. Residues 147–149 (DIE), 187–192 (KTKPTQ), and Lys-223 contribute to the CTP site. Residues 187-192 (KTKPTQ) and Lys-223 each bind UTP. An ATP-binding site is contributed by 239–241 (KDV). Residues 291–543 (VIGIIGKYIK…IKSAGKHKKN (253 aa)) form the Glutamine amidotransferase type-1 domain. Residue Gly-352 participates in L-glutamine binding. Cys-379 acts as the Nucleophile; for glutamine hydrolysis in catalysis. L-glutamine is bound by residues 380–383 (LGMQ), Glu-403, and Arg-471. Catalysis depends on residues His-516 and Glu-518.

This sequence belongs to the CTP synthase family. As to quaternary structure, homotetramer.

It catalyses the reaction UTP + L-glutamine + ATP + H2O = CTP + L-glutamate + ADP + phosphate + 2 H(+). It carries out the reaction L-glutamine + H2O = L-glutamate + NH4(+). The catalysed reaction is UTP + NH4(+) + ATP = CTP + ADP + phosphate + 2 H(+). It functions in the pathway pyrimidine metabolism; CTP biosynthesis via de novo pathway; CTP from UDP: step 2/2. With respect to regulation, allosterically activated by GTP, when glutamine is the substrate; GTP has no effect on the reaction when ammonia is the substrate. The allosteric effector GTP functions by stabilizing the protein conformation that binds the tetrahedral intermediate(s) formed during glutamine hydrolysis. Inhibited by the product CTP, via allosteric rather than competitive inhibition. In terms of biological role, catalyzes the ATP-dependent amination of UTP to CTP with either L-glutamine or ammonia as the source of nitrogen. Regulates intracellular CTP levels through interactions with the four ribonucleotide triphosphates. The polypeptide is CTP synthase (Buchnera aphidicola subsp. Acyrthosiphon pisum (strain Tuc7)).